The following is a 90-amino-acid chain: Small ribosomal subunit protein bS16 (90 aa).

It belongs to the bacterial ribosomal protein bS16 family.

This chain is Small ribosomal subunit protein bS16, found in Streptococcus pyogenes serotype M4 (strain MGAS10750).